A 191-amino-acid chain; its full sequence is Thymidine kinase (191 aa).

ATP contacts are provided by residues 9-16 (GTMNSGKT) and 85-88 (DEAQ). Catalysis depends on glutamate 86, which acts as the Proton acceptor. Zn(2+)-binding residues include cysteine 143, cysteine 146, cysteine 180, and histidine 183.

The protein belongs to the thymidine kinase family. In terms of assembly, homotetramer.

The protein resides in the cytoplasm. It catalyses the reaction thymidine + ATP = dTMP + ADP + H(+). In Streptococcus gordonii (strain Challis / ATCC 35105 / BCRC 15272 / CH1 / DL1 / V288), this protein is Thymidine kinase.